A 361-amino-acid chain; its full sequence is tRNA 2-selenouridine synthase (361 aa).

A Rhodanese domain is found at 11–134; the sequence is LLADTPLIDV…LRQTAIQATW (124 aa). Cys-94 functions as the S-selanylcysteine intermediate in the catalytic mechanism.

Belongs to the SelU family. In terms of assembly, monomer.

The catalysed reaction is 5-methylaminomethyl-2-thiouridine(34) in tRNA + selenophosphate + (2E)-geranyl diphosphate + H2O + H(+) = 5-methylaminomethyl-2-selenouridine(34) in tRNA + (2E)-thiogeraniol + phosphate + diphosphate. It carries out the reaction 5-methylaminomethyl-2-thiouridine(34) in tRNA + (2E)-geranyl diphosphate = 5-methylaminomethyl-S-(2E)-geranyl-thiouridine(34) in tRNA + diphosphate. The enzyme catalyses 5-methylaminomethyl-S-(2E)-geranyl-thiouridine(34) in tRNA + selenophosphate + H(+) = 5-methylaminomethyl-2-(Se-phospho)selenouridine(34) in tRNA + (2E)-thiogeraniol. It catalyses the reaction 5-methylaminomethyl-2-(Se-phospho)selenouridine(34) in tRNA + H2O = 5-methylaminomethyl-2-selenouridine(34) in tRNA + phosphate. Functionally, involved in the post-transcriptional modification of the uridine at the wobble position (U34) of tRNA(Lys), tRNA(Glu) and tRNA(Gln). Catalyzes the conversion of 2-thiouridine (S2U-RNA) to 2-selenouridine (Se2U-RNA). Acts in a two-step process involving geranylation of 2-thiouridine (S2U) to S-geranyl-2-thiouridine (geS2U) and subsequent selenation of the latter derivative to 2-selenouridine (Se2U) in the tRNA chain. This chain is tRNA 2-selenouridine synthase, found in Salmonella schwarzengrund (strain CVM19633).